The following is a 116-amino-acid chain: Fluoride-specific ion channel FluC 1 (116 aa).

A run of 4 helical transmembrane segments spans residues 1–21, 31–51, 58–78, and 92–112; these read MGKL…RYTV, IPAG…FLTF, MVYL…TFAY, and FFLN…IAYL. Na(+) contacts are provided by Gly-68 and Thr-71.

The protein belongs to the fluoride channel Fluc/FEX (TC 1.A.43) family.

It is found in the cell membrane. It catalyses the reaction fluoride(in) = fluoride(out). With respect to regulation, na(+) is not transported, but it plays an essential structural role and its presence is essential for fluoride channel function. Functionally, fluoride-specific ion channel. Important for reducing fluoride concentration in the cell, thus reducing its toxicity. This chain is Fluoride-specific ion channel FluC 1, found in Methanosarcina barkeri (strain Fusaro / DSM 804).